The primary structure comprises 150 residues: 3-dehydroquinate dehydratase (150 aa).

Tyrosine 26 acts as the Proton acceptor in catalysis. Substrate contacts are provided by asparagine 77, histidine 83, and aspartate 90. Residue histidine 103 is the Proton donor of the active site. Substrate contacts are provided by residues 104–105 and arginine 114; that span reads LS.

Belongs to the type-II 3-dehydroquinase family. As to quaternary structure, homododecamer.

It carries out the reaction 3-dehydroquinate = 3-dehydroshikimate + H2O. The protein operates within metabolic intermediate biosynthesis; chorismate biosynthesis; chorismate from D-erythrose 4-phosphate and phosphoenolpyruvate: step 3/7. In terms of biological role, catalyzes a trans-dehydration via an enolate intermediate. In Klebsiella pneumoniae (strain 342), this protein is 3-dehydroquinate dehydratase.